The following is a 235-amino-acid chain: Putative uridine kinase C227.14 (235 aa).

36-43 (GGPGSGKS) lines the ATP pocket.

It belongs to the uridine kinase family.

The protein localises to the cytoplasm. It is found in the nucleus. The catalysed reaction is uridine + ATP = UMP + ADP + H(+). The enzyme catalyses cytidine + ATP = CMP + ADP + H(+). It participates in pyrimidine metabolism; CTP biosynthesis via salvage pathway; CTP from cytidine: step 1/3. The protein operates within pyrimidine metabolism; UMP biosynthesis via salvage pathway; UMP from uridine: step 1/1. The polypeptide is Putative uridine kinase C227.14 (Schizosaccharomyces pombe (strain 972 / ATCC 24843) (Fission yeast)).